Here is an 82-residue protein sequence, read N- to C-terminus: UPF0213 protein SSP2268 (82 aa).

The GIY-YIG domain occupies 2-77 (DKHYIYIVKC…KTFSRQKKLK (76 aa)).

Belongs to the UPF0213 family.

The protein is UPF0213 protein SSP2268 of Staphylococcus saprophyticus subsp. saprophyticus (strain ATCC 15305 / DSM 20229 / NCIMB 8711 / NCTC 7292 / S-41).